Consider the following 303-residue polypeptide: Recombination-associated protein RdgC (303 aa).

The protein belongs to the RdgC family.

Its subcellular location is the cytoplasm. The protein resides in the nucleoid. Its function is as follows. May be involved in recombination. The protein is Recombination-associated protein RdgC of Pseudoalteromonas translucida (strain TAC 125).